Consider the following 269-residue polypeptide: tRNA pseudouridine synthase A (269 aa).

The Nucleophile role is filled by Asp-52. Tyr-110 serves as a coordination point for substrate.

Belongs to the tRNA pseudouridine synthase TruA family. As to quaternary structure, homodimer.

The catalysed reaction is uridine(38/39/40) in tRNA = pseudouridine(38/39/40) in tRNA. Formation of pseudouridine at positions 38, 39 and 40 in the anticodon stem and loop of transfer RNAs. The sequence is that of tRNA pseudouridine synthase A from Bacteroides thetaiotaomicron (strain ATCC 29148 / DSM 2079 / JCM 5827 / CCUG 10774 / NCTC 10582 / VPI-5482 / E50).